The sequence spans 316 residues: ATP synthase gamma chain (316 aa).

The protein belongs to the ATPase gamma chain family. As to quaternary structure, F-type ATPases have 2 components, CF(1) - the catalytic core - and CF(0) - the membrane proton channel. CF(1) has five subunits: alpha(3), beta(3), gamma(1), delta(1), epsilon(1). CF(0) has three main subunits: a, b and c.

It is found in the cellular thylakoid membrane. Functionally, produces ATP from ADP in the presence of a proton gradient across the membrane. The gamma chain is believed to be important in regulating ATPase activity and the flow of protons through the CF(0) complex. The protein is ATP synthase gamma chain of Prochlorococcus marinus (strain NATL2A).